A 551-amino-acid chain; its full sequence is Arylsulfatase (551 aa).

Positions 1 to 20 (MKSAPFLFLLGLLGLVTAQT) are cleaved as a signal peptide. The residue at position 21 (Q21) is a Blocked amino end (Gln). The Ca(2+) site is built by D60, H61, and C100. C100 serves as the catalytic Nucleophile. C100 carries the post-translational modification 3-oxoalanine (Cys). The active site involves H158. 3 N-linked (GlcNAc...) asparagine glycosylation sites follow: N164, N213, and N296. Ca(2+)-binding residues include D308 and H309.

This sequence belongs to the sulfatase family. Requires Ca(2+) as cofactor. Post-translationally, the conversion to 3-oxoalanine (also known as C-formylglycine, FGly), of a serine or cysteine residue in prokaryotes and of a cysteine residue in eukaryotes, is critical for catalytic activity.

It is found in the cytoplasm. Its subcellular location is the secreted. It localises to the extracellular space. The protein resides in the extracellular matrix. The enzyme catalyses an aryl sulfate + H2O = a phenol + sulfate + H(+). Its function is as follows. May be a structural component of the extracellular matrices involved in cell movement during morphogenesis. In Hemicentrotus pulcherrimus (Sea urchin), this protein is Arylsulfatase.